The chain runs to 178 residues: Protein GrpE (178 aa).

It belongs to the GrpE family. Homodimer.

Its subcellular location is the cytoplasm. In terms of biological role, participates actively in the response to hyperosmotic and heat shock by preventing the aggregation of stress-denatured proteins, in association with DnaK and GrpE. It is the nucleotide exchange factor for DnaK and may function as a thermosensor. Unfolded proteins bind initially to DnaJ; upon interaction with the DnaJ-bound protein, DnaK hydrolyzes its bound ATP, resulting in the formation of a stable complex. GrpE releases ADP from DnaK; ATP binding to DnaK triggers the release of the substrate protein, thus completing the reaction cycle. Several rounds of ATP-dependent interactions between DnaJ, DnaK and GrpE are required for fully efficient folding. The protein is Protein GrpE of Bordetella avium (strain 197N).